Consider the following 118-residue polypeptide: Large ribosomal subunit protein bL19 (118 aa).

Belongs to the bacterial ribosomal protein bL19 family.

This protein is located at the 30S-50S ribosomal subunit interface and may play a role in the structure and function of the aminoacyl-tRNA binding site. The polypeptide is Large ribosomal subunit protein bL19 (rplS) (Serratia marcescens).